The sequence spans 427 residues: Adenylosuccinate synthetase (427 aa).

Residues 12-18 (GDEGKGK) and 40-42 (GHT) contribute to the GTP site. The active-site Proton acceptor is the aspartate 13. Mg(2+) is bound by residues aspartate 13 and glycine 40. IMP is bound by residues 13–16 (DEGK), 38–41 (NAGH), threonine 128, arginine 142, glutamine 223, threonine 238, and arginine 302. Catalysis depends on histidine 41, which acts as the Proton donor. A substrate-binding site is contributed by 298–304 (TTTGRPR). GTP is bound by residues arginine 304, 330–332 (SID), and 412–414 (SVG).

The protein belongs to the adenylosuccinate synthetase family. In terms of assembly, homodimer. The cofactor is Mg(2+).

Its subcellular location is the cytoplasm. The enzyme catalyses IMP + L-aspartate + GTP = N(6)-(1,2-dicarboxyethyl)-AMP + GDP + phosphate + 2 H(+). It participates in purine metabolism; AMP biosynthesis via de novo pathway; AMP from IMP: step 1/2. Plays an important role in the de novo pathway of purine nucleotide biosynthesis. Catalyzes the first committed step in the biosynthesis of AMP from IMP. In Staphylococcus epidermidis (strain ATCC 35984 / DSM 28319 / BCRC 17069 / CCUG 31568 / BM 3577 / RP62A), this protein is Adenylosuccinate synthetase.